The following is a 77-amino-acid chain: Conotoxin Vc1 (77 aa).

The N-terminal stretch at 1 to 22 is a signal peptide; the sequence is MRTSGRLLLLCLAVGLLLESQA. 2 consecutive propeptides follow at residues 23–58 and 73–77; these read HPNA…KGQR and RRSFY.

The protein belongs to the conotoxin H superfamily. As to expression, expressed by the venom duct.

The protein resides in the secreted. Functionally, probable toxin. The chain is Conotoxin Vc1 from Conus victoriae (Queen Victoria cone).